The following is a 95-amino-acid chain: Protein TusB (95 aa).

This sequence belongs to the DsrH/TusB family. Heterohexamer, formed by a dimer of trimers. The hexameric TusBCD complex contains 2 copies each of TusB, TusC and TusD. The TusBCD complex interacts with TusE.

Its subcellular location is the cytoplasm. In terms of biological role, part of a sulfur-relay system required for 2-thiolation of 5-methylaminomethyl-2-thiouridine (mnm(5)s(2)U) at tRNA wobble positions. The polypeptide is Protein TusB (Escherichia coli O81 (strain ED1a)).